Reading from the N-terminus, the 542-residue chain is Protein lin-9 homolog (542 aa).

A2 is modified (N-acetylalanine). Positions A2–M296 are sufficient for interaction with RB1. Residue K21 forms a Glycyl lysine isopeptide (Lys-Gly) (interchain with G-Cter in SUMO2) linkage. Phosphoserine is present on residues S65 and S95. Phosphothreonine occurs at positions 96 and 304. Phosphoserine is present on residues S309 and S321. The stretch at I355 to C413 forms a coiled coil.

This sequence belongs to the lin-9 family. In terms of assembly, component of the DREAM complex (also named LINC complex) at least composed of E2F4, E2F5, LIN9, LIN37, LIN52, LIN54, MYBL1, MYBL2, RBL1, RBL2, RBBP4, TFDP1 and TFDP2. The complex exists in quiescent cells where it represses cell cycle-dependent genes. It dissociates in S phase when LIN9, LIN37, LIN52 and LIN54 form a subcomplex that binds to MYBL2. Interacts with RB1.

The protein resides in the nucleus. It localises to the nucleoplasm. Acts as a tumor suppressor. Inhibits DNA synthesis. Its ability to inhibit oncogenic transformation is mediated through its association with RB1. Plays a role in the expression of genes required for the G1/S transition. This chain is Protein lin-9 homolog (LIN9), found in Macaca fascicularis (Crab-eating macaque).